A 234-amino-acid polypeptide reads, in one-letter code: MLSSAKHNKINNHSAFSISSSSSSLSTSSSLGHNKSQVTMEEVWKEINLGSLHYHRQLNIGHEPMLKNQNPNNSIFQDFLNMPLNQPPPPPPPPSSSTIVTALYGSLPLPPPATVLSLNSGVGFEFLDTTENLLASNPRSFEESAKFGCLGKKRGQDSDDTRGDRRYKRMIKNRESAARSRARKQAYTNELELEIAHLQTENARLKIQQEQLKIAEATQNQVKKTLQRSSTAPF.

The Nuclear localization signal motif lies at 152–159 (KKRGQDSD). One can recognise a bZIP domain in the interval 163-213 (GDRRYKRMIKNRESAARSRARKQAYTNELELEIAHLQTENARLKIQQEQLK). Residues 165–184 (RRYKRMIKNRESAARSRARK) are basic motif. The interval 191 to 212 (LELEIAHLQTENARLKIQQEQL) is leucine-zipper. The residue at position 231 (Thr-231) is a Phosphothreonine.

Belongs to the bZIP family. Self-interacts. Interacts with FT and FD/BZIP14. Interacts with CPK33. Phosphorylated. Expressed on the flanks of the shoot apex.

It is found in the nucleus. Transcription factor required for the transition to flowering promoted by FT. This Arabidopsis thaliana (Mouse-ear cress) protein is bZIP transcription factor 27.